A 172-amino-acid polypeptide reads, in one-letter code: Large ribosomal subunit protein uL10 (172 aa).

This sequence belongs to the universal ribosomal protein uL10 family. As to quaternary structure, part of the ribosomal stalk of the 50S ribosomal subunit. The N-terminus interacts with L11 and the large rRNA to form the base of the stalk. The C-terminus forms an elongated spine to which L12 dimers bind in a sequential fashion forming a multimeric L10(L12)X complex.

Forms part of the ribosomal stalk, playing a central role in the interaction of the ribosome with GTP-bound translation factors. This chain is Large ribosomal subunit protein uL10, found in Chlorobium phaeovibrioides (strain DSM 265 / 1930) (Prosthecochloris vibrioformis (strain DSM 265)).